The chain runs to 119 residues: Aspartate 1-decarboxylase (119 aa).

Residue Ser25 is the Schiff-base intermediate with substrate; via pyruvic acid of the active site. Residue Ser25 is modified to Pyruvic acid (Ser). Thr57 contacts substrate. Tyr58 functions as the Proton donor in the catalytic mechanism. 73–75 (GAA) contributes to the substrate binding site.

It belongs to the PanD family. In terms of assembly, heterooctamer of four alpha and four beta subunits. The cofactor is pyruvate. Post-translationally, is synthesized initially as an inactive proenzyme, which is activated by self-cleavage at a specific serine bond to produce a beta-subunit with a hydroxyl group at its C-terminus and an alpha-subunit with a pyruvoyl group at its N-terminus.

It is found in the cytoplasm. The catalysed reaction is L-aspartate + H(+) = beta-alanine + CO2. Its pathway is cofactor biosynthesis; (R)-pantothenate biosynthesis; beta-alanine from L-aspartate: step 1/1. Catalyzes the pyruvoyl-dependent decarboxylation of aspartate to produce beta-alanine. The polypeptide is Aspartate 1-decarboxylase (Herminiimonas arsenicoxydans).